A 312-amino-acid chain; its full sequence is Malate dehydrogenase (312 aa).

NAD(+)-binding positions include 7–13 and aspartate 34; that span reads GAAGGIG. Residues arginine 81 and arginine 87 each coordinate substrate. NAD(+) is bound by residues asparagine 94 and 117–119; that span reads ITN. Asparagine 119 and arginine 153 together coordinate substrate. Histidine 177 serves as the catalytic Proton acceptor. Methionine 227 lines the NAD(+) pocket.

This sequence belongs to the LDH/MDH superfamily. MDH type 1 family. Homodimer.

It catalyses the reaction (S)-malate + NAD(+) = oxaloacetate + NADH + H(+). Its function is as follows. Catalyzes the reversible oxidation of malate to oxaloacetate. The sequence is that of Malate dehydrogenase from Photorhabdus laumondii subsp. laumondii (strain DSM 15139 / CIP 105565 / TT01) (Photorhabdus luminescens subsp. laumondii).